Consider the following 360-residue polypeptide: Peptide chain release factor 1 (360 aa).

At Gln235 the chain carries N5-methylglutamine. Positions 285–304 (KRQQEEASTRRNLLGSGDRS) are disordered.

The protein belongs to the prokaryotic/mitochondrial release factor family. Methylated by PrmC. Methylation increases the termination efficiency of RF1.

It localises to the cytoplasm. In terms of biological role, peptide chain release factor 1 directs the termination of translation in response to the peptide chain termination codons UAG and UAA. The sequence is that of Peptide chain release factor 1 from Edwardsiella ictaluri (strain 93-146).